Consider the following 102-residue polypeptide: Carboxysome shell protein CcmK3 (102 aa).

Residues 4–90 (AVGTIQTLGF…PQENVETVMP (87 aa)) enclose the BMC domain.

The protein belongs to the bacterial microcompartments protein family. CcmK subfamily. As to quaternary structure, interacts stably with CcmK4, probably forms heterohexamers with a 1:2 CcmK3:CcmK4 stoichiometry. Bulky residues in the pore region probably preclude the formation of homohexamers by this subunit.

It localises to the carboxysome. Functionally, a non-essential, minor shell protein of the carboxysome, a polyhedral inclusion where RuBisCO (ribulose bisphosphate carboxylase, rbcL-rbcS) is sequestered. Hexamers form sheets that form the facets of the polyhedral carboxysome. In PCC 7942 there are several CcmK paralogs with presumably functional differences. This subunit probably only makes heterohexamers with CcmK4. The CcmK3-CcmK4 heterohexmers have been suggested to cap other hexamers, perhaps to alter metabolite flux. The sequence is that of Carboxysome shell protein CcmK3 from Synechococcus elongatus (strain ATCC 33912 / PCC 7942 / FACHB-805) (Anacystis nidulans R2).